Here is a 223-residue protein sequence, read N- to C-terminus: Cytidylate kinase (223 aa).

10–18 contacts ATP; it reads GPAGAGKST.

Belongs to the cytidylate kinase family. Type 1 subfamily.

The protein localises to the cytoplasm. The catalysed reaction is CMP + ATP = CDP + ADP. The enzyme catalyses dCMP + ATP = dCDP + ADP. The polypeptide is Cytidylate kinase (Exiguobacterium sibiricum (strain DSM 17290 / CCUG 55495 / CIP 109462 / JCM 13490 / 255-15)).